The sequence spans 75 residues: Small ribosomal subunit protein bS18 (75 aa).

It belongs to the bacterial ribosomal protein bS18 family. As to quaternary structure, part of the 30S ribosomal subunit. Forms a tight heterodimer with protein bS6.

Functionally, binds as a heterodimer with protein bS6 to the central domain of the 16S rRNA, where it helps stabilize the platform of the 30S subunit. The polypeptide is Small ribosomal subunit protein bS18 (Acinetobacter baumannii (strain AB307-0294)).